A 72-amino-acid polypeptide reads, in one-letter code: Gas vesicle protein A (72 aa).

This sequence belongs to the gas vesicle GvpA family. As to quaternary structure, the gas vesicle shell is 2 nm thick and consists of a single layer of this protein. It forms helical ribs nearly perpendicular to the long axis of the vesicle.

The protein localises to the gas vesicle shell. Its function is as follows. Gas vesicles are hollow, gas filled proteinaceous nanostructures found in some microorganisms. During planktonic growth they allow positioning of the organism at a favorable depth for light or nutrient acquisition. GvpA forms the protein shell. The protein is Gas vesicle protein A of Synechococcus sp. (strain JA-3-3Ab) (Cyanobacteria bacterium Yellowstone A-Prime).